The following is a 364-amino-acid chain: Aminomethyltransferase (364 aa).

It belongs to the GcvT family. As to quaternary structure, the glycine cleavage system is composed of four proteins: P, T, L and H.

The catalysed reaction is N(6)-[(R)-S(8)-aminomethyldihydrolipoyl]-L-lysyl-[protein] + (6S)-5,6,7,8-tetrahydrofolate = N(6)-[(R)-dihydrolipoyl]-L-lysyl-[protein] + (6R)-5,10-methylene-5,6,7,8-tetrahydrofolate + NH4(+). In terms of biological role, the glycine cleavage system catalyzes the degradation of glycine. This is Aminomethyltransferase from Geobacillus kaustophilus (strain HTA426).